Here is a 173-residue protein sequence, read N- to C-terminus: Calmodulin-like protein 11 (173 aa).

Residues 1–26 (MEEIQQQQQQQQQQQQQQQQQQQQQQ) show a composition bias toward low complexity. Positions 1-27 (MEEIQQQQQQQQQQQQQQQQQQQQQQE) are disordered. EF-hand domains follow at residues 31–66 (EQIM…LDQN), 67–102 (PTEQ…QLQE), 104–139 (DADE…LGEK), and 140–173 (LTDE…MING). Positions 44, 46, 48, 50, 55, 80, 82, 84, 86, 91, 117, 119, 121, 123, 128, 153, 155, 157, 159, and 164 each coordinate Ca(2+).

Belongs to the calmodulin family.

In terms of biological role, potential calcium sensor. In Arabidopsis thaliana (Mouse-ear cress), this protein is Calmodulin-like protein 11 (CML11).